The following is a 324-amino-acid chain: Acetyl-coenzyme A carboxylase carboxyl transferase subunit alpha (324 aa).

One can recognise a CoA carboxyltransferase C-terminal domain in the interval 44 to 297; the sequence is LEERAKQLRY…KAALLRNLAE (254 aa).

This sequence belongs to the AccA family. Acetyl-CoA carboxylase is a heterohexamer composed of biotin carboxyl carrier protein (AccB), biotin carboxylase (AccC) and two subunits each of ACCase subunit alpha (AccA) and ACCase subunit beta (AccD).

It is found in the cytoplasm. It carries out the reaction N(6)-carboxybiotinyl-L-lysyl-[protein] + acetyl-CoA = N(6)-biotinyl-L-lysyl-[protein] + malonyl-CoA. Its pathway is lipid metabolism; malonyl-CoA biosynthesis; malonyl-CoA from acetyl-CoA: step 1/1. Component of the acetyl coenzyme A carboxylase (ACC) complex. First, biotin carboxylase catalyzes the carboxylation of biotin on its carrier protein (BCCP) and then the CO(2) group is transferred by the carboxyltransferase to acetyl-CoA to form malonyl-CoA. This Thermosynechococcus vestitus (strain NIES-2133 / IAM M-273 / BP-1) protein is Acetyl-coenzyme A carboxylase carboxyl transferase subunit alpha.